A 327-amino-acid chain; its full sequence is Mitochondrial coenzyme A transporter SLC25A42 (327 aa).

3 Solcar repeats span residues 34 to 120, 132 to 217, and 227 to 315; these read KSIL…YKKL, LTPI…LKKL, and PYPF…TQIL. The next 6 membrane-spanning stretches (helical) occupy residues 36–56, 92–112, 138–158, 189–209, 233–253, and 296–316; these read ILNS…AVAP, LWRG…IQFC, LLAG…LDLV, LYRG…ISFF, LLFG…LDVV, and VKGP…QILL.

The protein belongs to the mitochondrial carrier (TC 2.A.29) family.

The protein resides in the mitochondrion inner membrane. The catalysed reaction is ADP(out) + CoA(in) = ADP(in) + CoA(out). It catalyses the reaction 3'-dephospho-CoA(in) + ADP(out) = 3'-dephospho-CoA(out) + ADP(in). The enzyme catalyses adenosine 3',5'-bisphosphate(in) + ADP(out) = adenosine 3',5'-bisphosphate(out) + ADP(in). It carries out the reaction AMP(in) + ADP(out) = AMP(out) + ADP(in). The catalysed reaction is dADP(in) + ADP(out) = dADP(out) + ADP(in). It catalyses the reaction ADP(in) + ATP(out) = ADP(out) + ATP(in). Mitochondrial carrier mediating the transport of coenzyme A (CoA) in mitochondria in exchange for intramitochondrial (deoxy)adenine nucleotides and adenosine 3',5'-diphosphate. This chain is Mitochondrial coenzyme A transporter SLC25A42 (slc25a42), found in Xenopus tropicalis (Western clawed frog).